The sequence spans 1015 residues: MPVDKFLARAGGQRTLSRFQDSLCDFLATGSSRSLCGTSLDFPDRVLVCTEGPAGMEEASSPSFRQATTVEGMVSPEDPTLSKEGLSAKGPPPSPVLPPFRRKCRKCGICPQEEEKSGFSLRFGQRPDGDPPECASPEAFAGPPRLLSSKDTEPGEPGGSWVECAVETEVENMLFSKDGVAPDSLDHLFEFPGLFGGEPLSLVTQEPLQSPALYPEVLTEDSTDQQEVQPAFVVGSPGTPPDPVGPEDKAQSGSRMELEQGLSAPANSCASSPEPLGGLDGAPLEQRRPTHVKKRPWTSPDDSSQDHAEGASKKDFPRLEARVPRGVKTVYYVYTGSGIRLVGAASSSQPGQIEPLEELDTNSARRKRRPTTAHPTPCQSDPSETENAEPHQQRAEDPGEQGMTPLDAGVRSTVVRAMQEVLWTRAQELPDLALREDEVEAIAEGIEEALFHLTQDTNLRYKNKYRSLLFNLRDPRNVDLFLKVAHCDVTPNNLVQMSSIQLAPKELSRWRDQEERKGLDIIEQQQKELYRLPASKLTHKGEVEIPRDLDQMLTLEDLMEPIVPRECSLQPLSTPLEDTTNWHQHHQCDSNCQICTGGEEGRKADDGSQPELQVDISYNVDRKSSTKLPAFSGVIMNREENAIQKAPGPAPASSPEVLKVGETPPKEPQDRLQMPAGLKNAPPSPPPWEGSLDMFSIKHFRAKAQLISGHSCQLVQALPDVIRSAGRLPPSHVWDLLDSMGPSKAKDICVIRLCPHGSRDIQNYRLLYSYLNNKQCHCLATVQQVKMVLLPLPAFEPLPARLRPLGGPGLEITHTSLLLAVLFPKDALPDTATSIPVSNKVPKTVSFSKRVERILYSPEDRRSEATSSPLEEDPKQSLARGSLAPRSVCAPQSFPRGRGRQGPGWGQWSPEAAWCYSQHPSSAGPVFPGIGQGQHLHRASCFHHDLLQHLKVLVTMSHQFQASLWPQSQDSLPPSTVVSAVPDPPGPSLGPMDGGGSNCPPPEGSDPLEPPEHEC.

Disordered regions lie at residues 73-97 (MVSPEDPTLSKEGLSAKGPPPSPVL), 118-159 (GFSL…EPGG), 213-320 (LYPE…PRLE), and 344-406 (AASS…MTPL). The span at 304–320 (SQDHAEGASKKDFPRLE) shows a compositional bias: basic and acidic residues. The segment covering 373 to 382 (AHPTPCQSDP) has biased composition (polar residues). Over residues 388 to 397 (AEPHQQRAED) the composition is skewed to basic and acidic residues. A TFIIS central domain is found at 410 to 530 (VRSTVVRAMQ…IIEQQQKELY (121 aa)). The tract at residues 643–685 (IQKAPGPAPASSPEVLKVGETPPKEPQDRLQMPAGLKNAPPSP) is disordered. An SPOC domain is found at 688–791 (WEGSLDMFSI…VQQVKMVLLP (104 aa)). Disordered stretches follow at residues 858 to 906 (PEDR…PGWG) and 967 to 1015 (QSQD…EHEC). Over residues 967 to 978 (QSQDSLPPSTVV) the composition is skewed to polar residues.

As to quaternary structure, interacts with DNMT3A, DNMT3C and DNMT3L. Interacts with C19orf84 homolog. Interacts with SPIN1; promoting recruitment to transposons marked with histone H3 trimethylated at both 'Lys-4' and 'Lys-9' (H3K4me3K9me3).

It is found in the nucleus. Its subcellular location is the chromosome. Protein adapter that acts as an essential executor of PIWIL4-piRNA pathway directed transposon DNA methylation and silencing in the male embryonic germ cells. Recruited to young transposons, which are specifically marked with histone H3 trimethylated at both 'Lys-4' and 'Lys-9' (H3K4me3K9me3), via its association with SPIN1 chromatin reader, and associates with the de novo DNA methylation machinery and repressive chromatin remodeling complexes. Following this, PIWIL4 engages with nascent transposable element transcript to direct piRNA-directed DNA methylation. Not required for piRNA biosynthesis. This chain is SPOC domain-containing protein 1, found in Mus musculus (Mouse).